A 750-amino-acid chain; its full sequence is E3 ubiquitin-protein ligase rfwd3.S (750 aa).

The tract at residues 92 to 206 (RQAAEQRSSV…GAAPPAEPAP (115 aa)) is disordered. The span at 105-116 (RVQRRSTRRHQR) shows a compositional bias: basic residues. The span at 122-144 (TAGTSSRAALSNFFQINRTQGVA) shows a compositional bias: polar residues. Positions 168–181 (SSDETVELSEEEEG) are enriched in acidic residues. The RING-type; degenerate zinc finger occupies 263 to 307 (CAICFEPWTNAGQHRLSALRCGHLFGFTCIERWLKGGAAKCPQCN). A compositionally biased stretch (low complexity) spans 387–405 (TSMQASSSRSTISGSLSSS). A disordered region spans residues 387–406 (TSMQASSSRSTISGSLSSSQ). 3 WD repeats span residues 470–510 (IHSK…VVQT), 512–552 (NTGR…NCVQ), and 558–603 (GSRC…YRPH).

[4Fe-4S] cluster serves as cofactor.

The protein localises to the nucleus. Its subcellular location is the PML body. It localises to the cytoplasm. The enzyme catalyses S-ubiquitinyl-[E2 ubiquitin-conjugating enzyme]-L-cysteine + [acceptor protein]-L-lysine = [E2 ubiquitin-conjugating enzyme]-L-cysteine + N(6)-ubiquitinyl-[acceptor protein]-L-lysine.. The protein operates within protein modification; protein ubiquitination. E3 ubiquitin-protein ligase required for the repair of DNA interstrand cross-links (ICL) in response to DNA damage. Plays a key role in RPA-mediated DNA damage signaling and repair. Required to translesion DNA synthesis across DNA-protein cross-link adducts by catalyzing ubiquitination of proteins on single-stranded DNA (ssDNA). Mediates ubiquitination of the hmces DNA-protein cross-link, possibly promoting its degradation. The polypeptide is E3 ubiquitin-protein ligase rfwd3.S (rfwd3.S) (Xenopus laevis (African clawed frog)).